Consider the following 28-residue polypeptide: Peptide 2 (28 aa).

It belongs to the short scorpion toxin superfamily. Potassium channel inhibitor family. Alpha-KTx 09 subfamily. As to expression, expressed by the venom gland.

The protein resides in the secreted. Its function is as follows. Blocks potassium channels. The protein is Peptide 2 of Hottentotta tamulus sindicus (Scorpion).